The chain runs to 98 residues: Citrate lyase acyl carrier protein (98 aa).

Residue S14 is modified to O-(phosphoribosyl dephospho-coenzyme A)serine.

Belongs to the CitD family. Oligomer with a subunit composition of (alpha,beta,gamma)6.

The protein resides in the cytoplasm. In terms of biological role, covalent carrier of the coenzyme of citrate lyase. This Shigella flexneri protein is Citrate lyase acyl carrier protein.